The following is a 272-amino-acid chain: Undecaprenyl-diphosphatase (272 aa).

The next 8 membrane-spanning stretches (helical) occupy residues 1–21 (MSTL…FLPI), 39–59 (QGLA…MMYF), 91–111 (WWIL…KDFI), 117–137 (SALV…FADI), 151–171 (LGLK…IPGT), 196–216 (FLLS…KLIL), 228–248 (LGSL…LILL), and 251–271 (LGMM…LWFI).

It belongs to the UppP family.

Its subcellular location is the cell inner membrane. It catalyses the reaction di-trans,octa-cis-undecaprenyl diphosphate + H2O = di-trans,octa-cis-undecaprenyl phosphate + phosphate + H(+). Catalyzes the dephosphorylation of undecaprenyl diphosphate (UPP). Confers resistance to bacitracin. This Colwellia psychrerythraea (strain 34H / ATCC BAA-681) (Vibrio psychroerythus) protein is Undecaprenyl-diphosphatase.